We begin with the raw amino-acid sequence, 395 residues long: Octopamine receptor beta-2R (395 aa).

Residues 1–42 (MDPINGSHSGANATISDITNGAYNATDAGEWTSSVMFKLRTC) are Extracellular-facing. Asn5, Asn12, and Asn24 each carry an N-linked (GlcNAc...) asparagine glycan. Residues 43–63 (VLLLIVIMAVLGNMLVIVSVM) traverse the membrane as a helical segment. The Cytoplasmic portion of the chain corresponds to 64–74 (RHRKLRVITNY). The chain crosses the membrane as a helical span at residues 75–95 (FVVSLAFADILVAMVVMPFNF). Over 96-117 (SVQFNQGWVFGETICDLWNSSD) the chain is Extracellular. A glycan (N-linked (GlcNAc...) asparagine) is linked at Asn114. The chain crosses the membrane as a helical span at residues 118 to 140 (VYFTSTSILHLCCISVDRYYAIV). Residues 141–154 (KPLKYPIKMTKKMA) lie on the Cytoplasmic side of the membrane. Residues 155 to 175 (FVMLAATWLSPITISYVPIFM) traverse the membrane as a helical segment. Residues 176 to 202 (GWYTTTDFLESRRDDQCEFKVNKPYAV) are Extracellular-facing. The helical transmembrane segment at 203 to 223 (ISSSISFWIPCTIMIFTYLAI) threads the bilayer. The Cytoplasmic segment spans residues 224–282 (FKEANRQEKALHARAGNAMLMHRHSREVSDKNGALHINATTPTKDRNLLKMKREHKAAR). Residues 283-303 (TLGIIMGAFILCWLPFFLYYV) traverse the membrane as a helical segment. The Extracellular segment spans residues 304-315 (STSLCDSCNCPE). The helical transmembrane segment at 316–336 (VVTVIMFWTGYFNSALNPIIY) threads the bilayer. Residues 337 to 395 (AYFNRDFRNAFKNTLACAFCSFCKRSASDLDAMERLDRRGSAQLRVPIPSRRASDLASL) lie on the Cytoplasmic side of the membrane.

This sequence belongs to the G-protein coupled receptor 1 family.

The protein resides in the cell membrane. Functionally, autoreceptor for octopamine, which is a neurotransmitter, neurohormone, and neuromodulator in invertebrates. Also acts as a receptor for tyramine, but with much less potency. The activity of this receptor is mediated by G proteins which activate adenylyl cyclase. The polypeptide is Octopamine receptor beta-2R (Chilo suppressalis (Asiatic rice borer moth)).